The primary structure comprises 217 residues: Ras-related protein RIC2 (217 aa).

GTP-binding positions include 21 to 28, 69 to 73, and 127 to 130; these read GDSGVGKS, DTAGQ, and NKSD. S-geranylgeranyl cysteine attachment occurs at residues C214 and C215.

It belongs to the small GTPase superfamily. Rab family.

Its subcellular location is the cell membrane. Possesses GTPase activity. The polypeptide is Ras-related protein RIC2 (RIC2) (Oryza sativa subsp. japonica (Rice)).